A 162-amino-acid chain; its full sequence is Phenazine biosynthesis protein PhzB 2 (162 aa).

Phosphothreonine is present on T91.

This sequence belongs to the PhzA/PhzB family.

Involved in the biosynthesis of the antibiotic phenazine, a nitrogen-containing heterocyclic molecule having important roles in virulence, competition and biological control. This Pseudomonas aeruginosa (strain UCBPP-PA14) protein is Phenazine biosynthesis protein PhzB 2 (phzB2).